Here is a 450-residue protein sequence, read N- to C-terminus: Bifunctional protein GlmU (450 aa).

The interval 1 to 221 is pyrophosphorylase; it reads MRCIVLAAGM…SCEFIGINNR (221 aa). UDP-N-acetyl-alpha-D-glucosamine-binding positions include 6-9, Lys20, Gln69, 74-75, 96-98, Gly135, Glu150, Asn165, and Asn219; these read LAAG, GT, and YGD. Position 98 (Asp98) interacts with Mg(2+). Asn219 contacts Mg(2+). Residues 222–242 form a linker region; the sequence is IQLAQAEKFRRQWILEELMIK. Positions 243-450 are N-acetyltransferase; that stretch reads GVTIVDPETT…VIDKRKKEED (208 aa). UDP-N-acetyl-alpha-D-glucosamine is bound by residues Arg324 and Lys342. The Proton acceptor role is filled by His354. Positions 357 and 368 each coordinate UDP-N-acetyl-alpha-D-glucosamine. Acetyl-CoA contacts are provided by Ala371, Ser396, Ala414, and Arg431.

This sequence in the N-terminal section; belongs to the N-acetylglucosamine-1-phosphate uridyltransferase family. In the C-terminal section; belongs to the transferase hexapeptide repeat family. As to quaternary structure, homotrimer. Mg(2+) is required as a cofactor.

Its subcellular location is the cytoplasm. The enzyme catalyses alpha-D-glucosamine 1-phosphate + acetyl-CoA = N-acetyl-alpha-D-glucosamine 1-phosphate + CoA + H(+). The catalysed reaction is N-acetyl-alpha-D-glucosamine 1-phosphate + UTP + H(+) = UDP-N-acetyl-alpha-D-glucosamine + diphosphate. The protein operates within nucleotide-sugar biosynthesis; UDP-N-acetyl-alpha-D-glucosamine biosynthesis; N-acetyl-alpha-D-glucosamine 1-phosphate from alpha-D-glucosamine 6-phosphate (route II): step 2/2. It functions in the pathway nucleotide-sugar biosynthesis; UDP-N-acetyl-alpha-D-glucosamine biosynthesis; UDP-N-acetyl-alpha-D-glucosamine from N-acetyl-alpha-D-glucosamine 1-phosphate: step 1/1. Its pathway is bacterial outer membrane biogenesis; LPS lipid A biosynthesis. Functionally, catalyzes the last two sequential reactions in the de novo biosynthetic pathway for UDP-N-acetylglucosamine (UDP-GlcNAc). The C-terminal domain catalyzes the transfer of acetyl group from acetyl coenzyme A to glucosamine-1-phosphate (GlcN-1-P) to produce N-acetylglucosamine-1-phosphate (GlcNAc-1-P), which is converted into UDP-GlcNAc by the transfer of uridine 5-monophosphate (from uridine 5-triphosphate), a reaction catalyzed by the N-terminal domain. The protein is Bifunctional protein GlmU of Pseudothermotoga lettingae (strain ATCC BAA-301 / DSM 14385 / NBRC 107922 / TMO) (Thermotoga lettingae).